Consider the following 555-residue polypeptide: Glypican-6 (555 aa).

The first 23 residues, 1-23, serve as a signal peptide directing secretion; the sequence is MPSWIGAVILPLLGLLLSLPAGA. Residues 348–357 are compositionally biased toward low complexity; sequence PALRSARSAP. The tract at residues 348 to 376 is disordered; that stretch reads PALRSARSAPENFNTRFRPYNPEERPTTA. S529 carries GPI-anchor amidated serine lipidation. A propeptide spans 530–555 (removed in mature form); sequence SAAQRGHSLLSWSLTCIVLALQRLCR.

Belongs to the glypican family.

The protein resides in the cell membrane. It localises to the secreted. It is found in the extracellular space. Cell surface proteoglycan that bears heparan sulfate. Putative cell surface coreceptor for growth factors, extracellular matrix proteins, proteases and anti-proteases. Enhances migration and invasion of cancer cells through WNT5A signaling. This is Glypican-6 (GPC6) from Pongo abelii (Sumatran orangutan).